Reading from the N-terminus, the 800-residue chain is Protein PET111, mitochondrial (800 aa).

It to yeast YHR160C.

It is found in the mitochondrion matrix. Functionally, required for translation of the mitochondrial gene for cytochrome c oxidase subunit II (COX2). The protein is Protein PET111, mitochondrial (PET111) of Saccharomyces cerevisiae (strain ATCC 204508 / S288c) (Baker's yeast).